The chain runs to 120 residues: NADH-quinone oxidoreductase subunit A (120 aa).

3 helical membrane-spanning segments follow: residues Tyr6–Thr26, Phe63–Ala83, and Leu89–Trp109.

This sequence belongs to the complex I subunit 3 family. NDH-1 is composed of 14 different subunits. Subunits NuoA, H, J, K, L, M, N constitute the membrane sector of the complex.

It localises to the cell membrane. It carries out the reaction a quinone + NADH + 5 H(+)(in) = a quinol + NAD(+) + 4 H(+)(out). Functionally, NDH-1 shuttles electrons from NADH, via FMN and iron-sulfur (Fe-S) centers, to quinones in the respiratory chain. The immediate electron acceptor for the enzyme in this species is believed to be a menaquinone. Couples the redox reaction to proton translocation (for every two electrons transferred, four hydrogen ions are translocated across the cytoplasmic membrane), and thus conserves the redox energy in a proton gradient. The sequence is that of NADH-quinone oxidoreductase subunit A from Moorella thermoacetica (strain ATCC 39073 / JCM 9320).